We begin with the raw amino-acid sequence, 140 residues long: Low calcium response locus protein T (140 aa).

The protein is Low calcium response locus protein T (lcrT) of Yersinia pseudotuberculosis serotype I (strain IP32953).